Here is a 1435-residue protein sequence, read N- to C-terminus: Protein SPP41 (1435 aa).

7 disordered regions span residues 16–74, 88–265, 286–309, 322–424, 442–482, 519–708, and 934–972; these read VGNL…NIEI, VANA…ENTL, AKQTVDIQDNSHTDNTNNEDVEAQ, ELLS…DDEF, ETST…DSLD, SVSD…MKVP, and QQLDKQLPARSAGTEISSSESPDKATPDPHSNSTIAGHT. Acidic residues predominate over residues 27–42; sequence GQEEGEVQGGEQEGDD. 3 stretches are compositionally biased toward basic and acidic residues: residues 53-63, 98-127, and 139-154; these read IEPKHPDDSQH, EQAKPENHLENGSEHVTSDTADDNHEKEQQ, and LKSDGEPLRENTERRV. Residues 171-190 form the UIM domain; it reads QDDENLRMAILESLQELNTN. The segment covering 196–205 has biased composition (basic and acidic residues); the sequence is EPEKHEHAAP. The segment covering 211 to 223 has biased composition (basic residues); the sequence is SKKSSKKKKKDKS. Basic and acidic residues predominate over residues 224-234; sequence KNRESSKDKSS. Basic residues predominate over residues 235–249; that stretch reads KKSKSSSHSKKHAKD. Residues 286–301 show a composition bias toward polar residues; that stretch reads AKQTVDIQDNSHTDNT. Positions 345 to 355 are enriched in basic and acidic residues; it reads KAVEPPRKPTA. Basic residues predominate over residues 367-383; the sequence is KPKKRPPQEKKKTKSKT. Residues 384-398 show a composition bias toward low complexity; it reads SKAASTANKSPASES. Composition is skewed to polar residues over residues 442–451 and 459–482; these read ETSTHTATQD and DFTSPVQSQYTTEDASTANDDSLD. Composition is skewed to basic and acidic residues over residues 524–548, 610–628, and 637–652; these read LPHDNLSRMEKKSVPKSSSKSEKKT, KNKELKEKEKLERQTAREE, and KQRLAEEQEELKKIVE. Positions 665–674 are enriched in basic residues; that stretch reads KSGKPKKPYR. Residues 676–691 show a composition bias toward basic and acidic residues; the sequence is WTPEELLKRSQEAEKP. The Nuclear localization signal motif lies at 683 to 699; that stretch reads KRSQEAEKPRKVKKERK. Positions 692–706 are enriched in basic residues; sequence RKVKKERKKKEKKMK. Lys-981 is covalently cross-linked (Glycyl lysine isopeptide (Lys-Gly) (interchain with G-Cter in SUMO)). Positions 1005-1014 are enriched in basic and acidic residues; sequence KLELTKRAES. The tract at residues 1005-1125 is disordered; that stretch reads KLELTKRAES…DSVNTTTGKP (121 aa). Ser-1014 is modified (phosphoserine). Residues 1021-1032 are compositionally biased toward polar residues; sequence NVETAKETQSVQ. 2 stretches are compositionally biased toward basic and acidic residues: residues 1033–1082 and 1091–1103; these read EIKE…EKIA and LSDKKDGDEKSTL. Ser-1067 carries the phosphoserine modification. Polar residues predominate over residues 1108-1123; that stretch reads AQLTGNEPDSVNTTTG. A Glycyl lysine isopeptide (Lys-Gly) (interchain with G-Cter in SUMO) cross-link involves residue Lys-1154.

As to quaternary structure, interacts with PRP8 and RAP1.

The protein resides in the nucleus. Its function is as follows. Negative regulator of PRP3 and PRP4 genes. This is Protein SPP41 (SPP41) from Saccharomyces cerevisiae (strain ATCC 204508 / S288c) (Baker's yeast).